The chain runs to 440 residues: 3-phosphoshikimate 1-carboxyvinyltransferase (440 aa).

3-phosphoshikimate-binding residues include Lys-26, Ser-27, and Arg-31. Residue Lys-26 participates in phosphoenolpyruvate binding. The phosphoenolpyruvate site is built by Gly-100 and Arg-134. 3-phosphoshikimate contacts are provided by Ser-180, Ser-181, Gln-182, Ser-208, Asp-323, Asn-346, and Lys-350. Gln-182 contacts phosphoenolpyruvate. The Proton acceptor role is filled by Asp-323. Phosphoenolpyruvate is bound by residues Arg-354, Arg-398, and Lys-423.

This sequence belongs to the EPSP synthase family. As to quaternary structure, monomer.

It is found in the cytoplasm. It catalyses the reaction 3-phosphoshikimate + phosphoenolpyruvate = 5-O-(1-carboxyvinyl)-3-phosphoshikimate + phosphate. The protein operates within metabolic intermediate biosynthesis; chorismate biosynthesis; chorismate from D-erythrose 4-phosphate and phosphoenolpyruvate: step 6/7. In terms of biological role, catalyzes the transfer of the enolpyruvyl moiety of phosphoenolpyruvate (PEP) to the 5-hydroxyl of shikimate-3-phosphate (S3P) to produce enolpyruvyl shikimate-3-phosphate and inorganic phosphate. The polypeptide is 3-phosphoshikimate 1-carboxyvinyltransferase (Pasteurella multocida (strain Pm70)).